The chain runs to 426 residues: Glutamyl-tRNA reductase (426 aa).

Residues 49–52 (TCNR), Ser-109, 114–116 (EGQ), and Gln-120 each bind substrate. Cys-50 acts as the Nucleophile in catalysis. 189–194 (GAGETG) provides a ligand contact to NADP(+).

It belongs to the glutamyl-tRNA reductase family. In terms of assembly, homodimer.

The catalysed reaction is (S)-4-amino-5-oxopentanoate + tRNA(Glu) + NADP(+) = L-glutamyl-tRNA(Glu) + NADPH + H(+). It functions in the pathway porphyrin-containing compound metabolism; protoporphyrin-IX biosynthesis; 5-aminolevulinate from L-glutamyl-tRNA(Glu): step 1/2. Its pathway is porphyrin-containing compound metabolism; chlorophyll biosynthesis. Its function is as follows. Catalyzes the NADPH-dependent reduction of glutamyl-tRNA(Glu) to glutamate 1-semialdehyde (GSA). The sequence is that of Glutamyl-tRNA reductase from Prosthecochloris aestuarii (strain DSM 271 / SK 413).